Reading from the N-terminus, the 157-residue chain is 2-C-methyl-D-erythritol 2,4-cyclodiphosphate synthase (157 aa).

Residues Asp8 and His10 each coordinate a divalent metal cation. 4-CDP-2-C-methyl-D-erythritol 2-phosphate contacts are provided by residues 8–10 and 34–35; these read DVH and HS. His42 provides a ligand contact to a divalent metal cation. Residues 56-58, 61-65, 132-135, Phe139, and Arg142 each bind 4-CDP-2-C-methyl-D-erythritol 2-phosphate; these read DIG, FPDTD, and TTTE.

The protein belongs to the IspF family. In terms of assembly, homotrimer. It depends on a divalent metal cation as a cofactor.

The catalysed reaction is 4-CDP-2-C-methyl-D-erythritol 2-phosphate = 2-C-methyl-D-erythritol 2,4-cyclic diphosphate + CMP. The protein operates within isoprenoid biosynthesis; isopentenyl diphosphate biosynthesis via DXP pathway; isopentenyl diphosphate from 1-deoxy-D-xylulose 5-phosphate: step 4/6. Functionally, involved in the biosynthesis of isopentenyl diphosphate (IPP) and dimethylallyl diphosphate (DMAPP), two major building blocks of isoprenoid compounds. Catalyzes the conversion of 4-diphosphocytidyl-2-C-methyl-D-erythritol 2-phosphate (CDP-ME2P) to 2-C-methyl-D-erythritol 2,4-cyclodiphosphate (ME-CPP) with a corresponding release of cytidine 5-monophosphate (CMP). The chain is 2-C-methyl-D-erythritol 2,4-cyclodiphosphate synthase from Geotalea uraniireducens (strain Rf4) (Geobacter uraniireducens).